Reading from the N-terminus, the 597-residue chain is Elongation factor 4 (597 aa).

A tr-type G domain is found at 2 to 184 (KNIRNFSIIA…TVVQKIPAPK (183 aa)). GTP contacts are provided by residues 14–19 (DHGKST) and 131–134 (NKID).

It belongs to the TRAFAC class translation factor GTPase superfamily. Classic translation factor GTPase family. LepA subfamily.

It is found in the cell inner membrane. It carries out the reaction GTP + H2O = GDP + phosphate + H(+). In terms of biological role, required for accurate and efficient protein synthesis under certain stress conditions. May act as a fidelity factor of the translation reaction, by catalyzing a one-codon backward translocation of tRNAs on improperly translocated ribosomes. Back-translocation proceeds from a post-translocation (POST) complex to a pre-translocation (PRE) complex, thus giving elongation factor G a second chance to translocate the tRNAs correctly. Binds to ribosomes in a GTP-dependent manner. The polypeptide is Elongation factor 4 (Laribacter hongkongensis (strain HLHK9)).